A 193-amino-acid chain; its full sequence is Outer membrane lipoprotein DolP (193 aa).

Residues Met1–Gly21 form the signal peptide. Cys22 carries N-palmitoyl cysteine lipidation. Cys22 is lipidated: S-diacylglycerol cysteine. BON domains are found at residues Asp48–Pro117 and Lys126–Asp193.

The protein belongs to the lipoprotein DolP family.

Its subcellular location is the cell outer membrane. In terms of biological role, plays an important role in maintaining outer membrane integrity. The sequence is that of Outer membrane lipoprotein DolP from Haemophilus influenzae (strain ATCC 51907 / DSM 11121 / KW20 / Rd).